We begin with the raw amino-acid sequence, 1531 residues long: Probable outer membrane protein PmpD (1531 aa).

A signal peptide spans 1–20; the sequence is MSSEKDIKSTCSKFSLSVVA. The 288-residue stretch at 1244-1531 folds into the Autotransporter domain; sequence EFDYSTNVWG…EANTGLRLIF (288 aa).

It belongs to the PMP outer membrane protein family.

It localises to the secreted. It is found in the cell wall. The protein localises to the cell outer membrane. The chain is Probable outer membrane protein PmpD (pmpD) from Chlamydia trachomatis serovar D (strain ATCC VR-885 / DSM 19411 / UW-3/Cx).